The sequence spans 817 residues: Protein Jade-3 (817 aa).

Residues 1 to 38 form a disordered region; the sequence is MKRLRNLSSSDSSDNESPSTSFSSCFQHKGKGKCTADD. Low complexity predominate over residues 8–24; sequence SSSDSSDNESPSTSFSS. The PHD-type 1 zinc-finger motif lies at 202–252; that stretch reads DVICDVCRSPDSEEGNDMVFCDRCNICVHQACYGILKVPEGSWLCRTCVLG. The C2HC pre-PHD-type zinc-finger motif lies at 254–288; it reads HPQCILCPKTGGAMKATRTGTKWAHVSCALWIPEV. A PHD-type 2 zinc finger spans residues 312-368; it reads LVCSLCKLKTGACIQCSVKSCITAFHVTCAFEHSLEMKTILDEGDEVKFKSYCLKHS. 3 disordered regions span residues 375–396, 665–689, and 719–817; these read ISEQ…SERT, NGVL…QNSE, and LVRT…SVQR. Basic and acidic residues predominate over residues 379–396; sequence EEPHKTHSDNRPTESERT. Residues 667 to 689 show a composition bias toward polar residues; sequence VLSSGDRTQRDSSSQTSPGQNSE. The span at 722–743 shows a compositional bias: basic and acidic residues; the sequence is TTEDLRSSEKPQRRQSVKERLW. The span at 747-758 shows a compositional bias: polar residues; sequence PADTQTSGTPYQ. The segment covering 777–799 has biased composition (basic and acidic residues); it reads DENKDHMLLRRNSRESPNRDSCR. A compositionally biased stretch (basic residues) spans 801 to 810; sequence SRIRGKRKMT.

It belongs to the JADE family. Component of the HBO1 complex.

Its function is as follows. Scaffold subunit of some HBO1 complexes, which have a histone H4 acetyltransferase activity. The protein is Protein Jade-3 (jade3) of Xenopus tropicalis (Western clawed frog).